We begin with the raw amino-acid sequence, 272 residues long: S-adenosylmethionine decarboxylase proenzyme (272 aa).

Ser122 serves as the catalytic Schiff-base intermediate with substrate; via pyruvic acid. Ser122 carries the post-translational modification Pyruvic acid (Ser); by autocatalysis. His127 acts as the Proton acceptor; for processing activity in catalysis. Cys150 acts as the Proton donor; for catalytic activity in catalysis.

The protein belongs to the prokaryotic AdoMetDC family. Type 2 subfamily. Heterooctamer of four alpha and four beta chains arranged as a tetramer of alpha/beta heterodimers. Pyruvate is required as a cofactor. Is synthesized initially as an inactive proenzyme. Formation of the active enzyme involves a self-maturation process in which the active site pyruvoyl group is generated from an internal serine residue via an autocatalytic post-translational modification. Two non-identical subunits are generated from the proenzyme in this reaction, and the pyruvate is formed at the N-terminus of the alpha chain, which is derived from the carboxyl end of the proenzyme. The post-translation cleavage follows an unusual pathway, termed non-hydrolytic serinolysis, in which the side chain hydroxyl group of the serine supplies its oxygen atom to form the C-terminus of the beta chain, while the remainder of the serine residue undergoes an oxidative deamination to produce ammonia and the pyruvoyl group blocking the N-terminus of the alpha chain.

The catalysed reaction is S-adenosyl-L-methionine + H(+) = S-adenosyl 3-(methylsulfanyl)propylamine + CO2. It functions in the pathway amine and polyamine biosynthesis; S-adenosylmethioninamine biosynthesis; S-adenosylmethioninamine from S-adenosyl-L-methionine: step 1/1. Functionally, catalyzes the decarboxylation of S-adenosylmethionine to S-adenosylmethioninamine (dcAdoMet), the propylamine donor required for the synthesis of the polyamines spermine and spermidine from the diamine putrescine. The chain is S-adenosylmethionine decarboxylase proenzyme from Clostridium botulinum (strain Eklund 17B / Type B).